Consider the following 345-residue polypeptide: Magnesium-chelatase 38 kDa subunit (345 aa).

Position 35–42 (35–42 (GDRGTGKS)) interacts with ATP.

The protein belongs to the Mg-chelatase subunits D/I family.

The enzyme catalyses protoporphyrin IX + Mg(2+) + ATP + H2O = Mg-protoporphyrin IX + ADP + phosphate + 3 H(+). It participates in porphyrin-containing compound metabolism; bacteriochlorophyll biosynthesis. In terms of biological role, involved in bacteriochlorophyll biosynthesis; introduces a magnesium ion into protoporphyrin IX to yield Mg-protoporphyrin IX. This Acidiphilium rubrum protein is Magnesium-chelatase 38 kDa subunit (bchI).